A 953-amino-acid polypeptide reads, in one-letter code: Mannosylglycoprotein endo-beta-mannosidase (953 aa).

The active-site Proton donor is Glu461. Residue Glu553 is the Nucleophile of the active site.

Belongs to the glycosyl hydrolase 2 family. As to quaternary structure, heterotrimer of 31 kDa, 28 kDa and 42 kDa subunits. Post-translationally, the mature enzyme is proteotically cleaved into 3 subunits of 31 kDa, 28 kDa and 42 kDa. As to expression, ubiquitously expressed.

It carries out the reaction Hydrolysis of the alpha-D-mannosyl-(1-&gt;6)-beta-D-mannosyl-(1-&gt;4)-N-acetyl-beta-D-glucosaminyl-(1-&gt;4)-N-acetyl-beta-D-glucosaminyl sequence of glycoprotein to alpha-D-mannosyl-(1-&gt;6)-D-mannose and N-acetyl-beta-D-glucosaminyl-(1-&gt;4)-N-acetyl-beta-D-glucosaminyl sequences.. In terms of biological role, glycosidase that specifically hydrolyzes the Man-beta-1,4-GlcNAc linkage in the trimannosyl core structure of N-glycans. Does not hydrolyzes pyridylamino derivatives sugar chains containing Man-alpha-1,3-Man-beta or Xylose-beta-1,2-Man-beta. The sequence is that of Mannosylglycoprotein endo-beta-mannosidase (EBM) from Lilium longiflorum (Trumpet lily).